A 103-amino-acid polypeptide reads, in one-letter code: Large ribosomal subunit protein bL21 (103 aa).

This sequence belongs to the bacterial ribosomal protein bL21 family. As to quaternary structure, part of the 50S ribosomal subunit. Contacts protein L20.

This protein binds to 23S rRNA in the presence of protein L20. This chain is Large ribosomal subunit protein bL21, found in Colwellia psychrerythraea (strain 34H / ATCC BAA-681) (Vibrio psychroerythus).